The primary structure comprises 170 residues: Large ribosomal subunit protein uL10 (170 aa).

It belongs to the universal ribosomal protein uL10 family. Part of the ribosomal stalk of the 50S ribosomal subunit. The N-terminus interacts with L11 and the large rRNA to form the base of the stalk. The C-terminus forms an elongated spine to which L12 dimers bind in a sequential fashion forming a multimeric L10(L12)X complex.

Its function is as follows. Forms part of the ribosomal stalk, playing a central role in the interaction of the ribosome with GTP-bound translation factors. The chain is Large ribosomal subunit protein uL10 from Nitratiruptor sp. (strain SB155-2).